The sequence spans 99 residues: Large ribosomal subunit protein eL21 (99 aa).

The protein belongs to the eukaryotic ribosomal protein eL21 family.

The chain is Large ribosomal subunit protein eL21 from Pyrobaculum calidifontis (strain DSM 21063 / JCM 11548 / VA1).